An 834-amino-acid polypeptide reads, in one-letter code: Transcription intermediary factor 1-beta (834 aa).

At Ala-2 the chain carries N-acetylalanine. Positions Ala-13–Ser-23 are enriched in low complexity. Positions Ala-13–Gly-56 are disordered. Phosphoserine occurs at positions 23, 26, and 30. Lys-35 participates in a covalent cross-link: Glycyl lysine isopeptide (Lys-Gly) (interchain with G-Cter in SUMO2). Residues Ala-38–Pro-52 are compositionally biased toward low complexity. Phosphoserine is present on Ser-51. The RING-type zinc finger occupies Cys-66–Lys-122. Lys-128 is covalently cross-linked (Glycyl lysine isopeptide (Lys-Gly) (interchain with G-Cter in SUMO2)). Position 139 is a phosphoserine (Ser-139). The segment at Asp-149–Thr-196 adopts a B box-type 1 zinc-finger fold. Zn(2+) is bound by residues Cys-154, Cys-157, Cys-178, and His-182. A Glycyl lysine isopeptide (Lys-Gly) (interchain with G-Cter in SUMO2) cross-link involves residue Lys-200. A B box-type 2 zinc finger spans residues Glu-205 to Leu-246. Cys-210, His-213, Cys-233, and His-238 together coordinate Zn(2+). The leucine zipper alpha helical coiled-coil region stretch occupies residues Glu-247–Leu-377. Residues Asp-248–Leu-377 are interaction with MAGEC2. Residues Lys-255 and Lys-262 each participate in a glycyl lysine isopeptide (Lys-Gly) (interchain with G-Cter in SUMO2) cross-link. An N6-acetyllysine modification is found at Lys-267. Residue Lys-273 forms a Glycyl lysine isopeptide (Lys-Gly) (interchain with G-Cter in SUMO2) linkage. The residue at position 305 (Lys-305) is an N6-acetyllysine; alternate. A Glycyl lysine isopeptide (Lys-Gly) (interchain with G-Cter in SUMO2); alternate cross-link involves residue Lys-305. Lys-320 is covalently cross-linked (Glycyl lysine isopeptide (Lys-Gly) (interchain with G-Cter in SUMO2)). At Lys-341 the chain carries N6-acetyllysine. Lys-367 participates in a covalent cross-link: Glycyl lysine isopeptide (Lys-Gly) (interchain with G-Cter in SUMO2). The involved in binding PPP1CA stretch occupies residues Lys-367–Phe-371. An N6-acetyllysine; alternate modification is found at Lys-378. A Glycyl lysine isopeptide (Lys-Gly) (interchain with G-Cter in SUMO2); alternate cross-link involves residue Lys-378. Residue Lys-378 forms a Glycyl lysine isopeptide (Lys-Gly) (interchain with G-Cter in SUMO1); alternate linkage. Residue Lys-408 forms a Glycyl lysine isopeptide (Lys-Gly) (interchain with G-Cter in SUMO2) linkage. The disordered stretch occupies residues Glu-412–Gly-480. Ser-418 bears the Phosphoserine mark. A Glycyl lysine isopeptide (Lys-Gly) (interchain with G-Cter in SUMO2) cross-link involves residue Lys-435. Polar residues predominate over residues Lys-435–Met-444. Residues Ser-438, Ser-440, and Ser-454 each carry the phosphoserine modification. A Glycyl lysine isopeptide (Lys-Gly) (interchain with G-Cter in SUMO2); alternate cross-link involves residue Lys-469. Lys-469 is covalently cross-linked (Glycyl lysine isopeptide (Lys-Gly) (interchain with G-Cter in SUMO1); alternate). At Arg-470 the chain carries Citrulline. A Phosphoserine modification is found at Ser-471. Arg-472 is modified (citrulline). Ser-473, Ser-479, and Ser-489 each carry phosphoserine. Positions Gly-476–Thr-513 are HP1 box. Residues Leu-481–Asp-494 carry the PxVxL motif motif. Thr-498 carries the post-translational modification Phosphothreonine. Ser-501 bears the Phosphoserine mark. A Glycyl lysine isopeptide (Lys-Gly) (interchain with G-Cter in SUMO2) cross-link involves residue Lys-507. Lys-554 is covalently cross-linked (Glycyl lysine isopeptide (Lys-Gly) (interchain with G-Cter in SUMO2); alternate). Lys-554 is covalently cross-linked (Glycyl lysine isopeptide (Lys-Gly) (interchain with G-Cter in SUMO); alternate). Lys-575 participates in a covalent cross-link: Glycyl lysine isopeptide (Lys-Gly) (interchain with G-Cter in SUMO2). The disordered stretch occupies residues Leu-581–Gly-602. The residue at position 594 (Ser-594) is a Phosphoserine. The segment at Ala-625–Leu-672 adopts a PHD-type zinc-finger fold. Residue Lys-676 forms a Glycyl lysine isopeptide (Lys-Gly) (interchain with G-Cter in SUMO) linkage. 3 positions are modified to phosphoserine: Ser-683, Ser-689, and Ser-697. A Bromo domain is found at Lys-695–Ala-799. Lys-750 is covalently cross-linked (Glycyl lysine isopeptide (Lys-Gly) (interchain with G-Cter in SUMO2); alternate). Residue Lys-750 forms a Glycyl lysine isopeptide (Lys-Gly) (interchain with G-Cter in SUMO1); alternate linkage. A Glycyl lysine isopeptide (Lys-Gly) (interchain with G-Cter in SUMO); alternate cross-link involves residue Lys-750. Ser-752 carries the post-translational modification Phosphoserine. Tyr-755 bears the Phosphotyrosine mark. Ser-757 carries the phosphoserine modification. Lys-770, Lys-774, and Lys-779 each carry N6-acetyllysine; alternate. Glycyl lysine isopeptide (Lys-Gly) (interchain with G-Cter in SUMO2); alternate cross-links involve residues Lys-770, Lys-774, and Lys-779. A Glycyl lysine isopeptide (Lys-Gly) (interchain with G-Cter in SUMO1); alternate cross-link involves residue Lys-779. Phosphoserine is present on Ser-784. Residue Lys-804 forms a Glycyl lysine isopeptide (Lys-Gly) (interchain with G-Cter in SUMO2) linkage. Position 824 is a phosphoserine; by ATM and ATR and dsDNA kinase (Ser-824).

This sequence belongs to the TRIM/RBCC family. Oligomer; the RBCC domain homotrimerizes and interacts with one molecule of KRAB to form the KRAB-KAP1 corepressor complex. Interacts with SETX. Binding to a KRAB domain is an absolute requirement for silencing gene expression. Interacts with a number of KRAB-ZFP proteins including ZNF10, ZFP53, ZFP68, ZNF382 and ZNF256. Interacts with NCOR1, NR3C1 and CHD3. Interacts with CEBPB (via the RING-type and PHD-type zinc fingers). Interacts with CBX5 (via the PxVxL motif); the interaction occurs in interphase nuclei and competes for binding POGZ. Interacts with POGZ; the interaction competes for interaction with CBX5. Interacts with SETDB1; the interaction is enhanced by KAP1 sumoylation, stimulates SETDB1 histone methyltransferase activity and gene silencing. Interacts (via the PHD-type zinc finger) with UBE2I; the interaction is required for sumoylation and repressor activity. Component of the TRIM28/KAP1-ERBB4-MDM2 complex involved in connecting growth factor and DNA damage responses. Interacts directly with ERBB4; the interaction represses ERBB4-mediated transcription activity. Interacts with MDM2; the interaction contributes to p53/TP53 inactivation. Component of the TRIM28/KAP1-MDM2-p53/TP53; involved in regulating p53/TP53 stabilization and activity. Interacts (via the leucine zipper alpha helical coiled-coil) with E2F1 (central region); the interaction inhibits E2F1 acetylation and transcriptional activity. Interacts with PPP1CA; the interaction dephosphorylates TRIM28 at Ser-824 and forms a complex at the p21 promoter site. Interacts with PPP1CB; the interaction is weak but is increased on dephosphorylation at Ser-824. Interacts with CEBPB and NR3C1. Interacts with CBX5 (via the PxVxL motif); the interaction occurs in interphase nuclei and competes for binding POGZ. Component of a ternary complex that includes TRIM28, a HP1 protein (CBX1, CBX3 OR CBX5), a KRAB domain-containing protein, and DNA. Interacts with SMARCAD1. Interacts with, and sumoylates IRF7. Interacts with MAGEC2. Part of a complex composed of TRIM28, HDAC1, HDAC2 and EHMT2. Interacts (via the RBCC domain) with KOX1 (via the KRAB domain), ZNF268 (via the KRAB domain) and ZNF300 (via the KRAB domain); the interactions increase KOX1, ZNF268 and ZNF300 nuclear localization activities. Interacts with AICDA. The large PER complex involved in the histone methylation is composed of at least PER2, CBX3, TRIM28, SUV39H1 and/or SUV39H2; CBX3 mediates the formation of the complex. Interacts with NR4A3; the interactions potentiates NR4A3 activity on NurRE promoter. Interacts (unphosphorylated or phosphorylated form) with ZBTB1 (via BTB domain). Probably part of a corepressor complex containing ZNF304, TRIM28, SETDB1 and DNMT1. Interacts with ATRX. Forms a complex with ATRX, SETDB1 and ZNF274. Interacts with ZFP568; the interaction mediates ZFP568 transcriptional repression activity. Interacts with RRP1B. Interacts with CRY1. Interacts with ZNF263; recruited to the SIX3 promoter along with other proteins involved in chromatin modification and transcriptional corepression where it contributes to transcriptional repression. Interacts with CYREN (via XLF motif). Interacts with TRIM17; this interaction prevents TRIM28 activity. Interacts with ZNF746. Interacts with PHF13. Interacts with ZNF354C. Interacts with ZNF432; the interaction is independent of PARP1. In terms of processing, ATM-induced phosphorylation on Ser-824 represses sumoylation leading to the de-repression of expression of a subset of genes involved in cell cycle control and apoptosis in response to genotoxic stress. Dephosphorylation by the phosphatases, PPP1CA and PP1CB forms, allows sumoylation and expression of TRIM28 target genes. Sumoylation/desumoylation events regulate TRIM28-mediated transcriptional repression. Sumoylation is required for interaction with CHD3 and SETDB1 and the corepressor activity. Represses and is repressed by Ser-824 phosphorylation. Enhances the TRIM28 corepressor activity, inhibiting transcriptional activity of a number of genes including GADD45A and CDKN1A/p21. Lys-554, Lys-779 and Lys-804 are the major sites of sumoylation. In response to Dox-induced DNA damage, enhanced phosphorylation on Ser-824 prevents sumoylation and allows de-repression of CDKN1A/p21. Post-translationally, auto-ubiquitinated; enhanced by MAGEA2 and MAGEC2. In terms of processing, citrullinated by PADI4. ADP-ribosylated by SIRT6, promoting TRIM28/KAP1 interaction with CBX5, thereby contributing to the packaging of LINE-1 retrotransposon elements into transcriptionally repressive heterochromatin.

The protein localises to the nucleus. It carries out the reaction S-ubiquitinyl-[E2 ubiquitin-conjugating enzyme]-L-cysteine + [acceptor protein]-L-lysine = [E2 ubiquitin-conjugating enzyme]-L-cysteine + N(6)-ubiquitinyl-[acceptor protein]-L-lysine.. It functions in the pathway protein modification; protein sumoylation. Its function is as follows. Nuclear corepressor for KRAB domain-containing zinc finger proteins (KRAB-ZFPs). Mediates gene silencing by recruiting CHD3, a subunit of the nucleosome remodeling and deacetylation (NuRD) complex, and SETDB1 (which specifically methylates histone H3 at 'Lys-9' (H3K9me)) to the promoter regions of KRAB target genes. Enhances transcriptional repression by coordinating the increase in H3K9me, the decrease in histone H3 'Lys-9 and 'Lys-14' acetylation (H3K9ac and H3K14ac, respectively) and the disposition of HP1 proteins to silence gene expression. Recruitment of SETDB1 induces heterochromatinization. May play a role as a coactivator for CEBPB and NR3C1 in the transcriptional activation of ORM1. Also a corepressor for ERBB4. Inhibits E2F1 activity by stimulating E2F1-HDAC1 complex formation and inhibiting E2F1 acetylation. May serve as a partial backup to prevent E2F1-mediated apoptosis in the absence of RB1. Important regulator of CDKN1A/p21(CIP1). Has E3 SUMO-protein ligase activity toward itself via its PHD-type zinc finger. Specifically sumoylates IRF7, thereby inhibiting its transactivation activity. Ubiquitinates p53/TP53 leading to its proteasomal degradation; the function is enhanced by MAGEC2 and MAGEA2, and possibly MAGEA3 and MAGEA6. Mediates the nuclear localization of KOX1, ZNF268 and ZNF300 transcription factors. Probably forms a corepressor complex required for activated KRAS-mediated promoter hypermethylation and transcriptional silencing of tumor suppressor genes (TSGs) or other tumor-related genes in colorectal cancer (CRC) cells. Required to maintain a transcriptionally repressive state of genes in undifferentiated embryonic stem cells (ESCs). In ESCs, in collaboration with SETDB1, is also required for H3K9me3 and silencing of endogenous and introduced retroviruses in a DNA-methylation independent-pathway. Associates at promoter regions of tumor suppressor genes (TSGs) leading to their gene silencing. The SETDB1-TRIM28-ZNF274 complex may play a role in recruiting ATRX to the 3'-exons of zinc-finger coding genes with atypical chromatin signatures to establish or maintain/protect H3K9me3 at these transcriptionally active regions. Acts as a corepressor for ZFP568. The chain is Transcription intermediary factor 1-beta from Mus musculus (Mouse).